The primary structure comprises 336 residues: Fructose-1,6-bisphosphatase class 1 (336 aa).

Residues E92, D115, L117, and D118 each contribute to the Mg(2+) site. Substrate contacts are provided by residues 118–121 (DGSS), N211, Y244, 262–264 (YLY), and K274. A Mg(2+)-binding site is contributed by E280.

The protein belongs to the FBPase class 1 family. As to quaternary structure, homotetramer. Requires Mg(2+) as cofactor.

The protein localises to the cytoplasm. It catalyses the reaction beta-D-fructose 1,6-bisphosphate + H2O = beta-D-fructose 6-phosphate + phosphate. It functions in the pathway carbohydrate biosynthesis; gluconeogenesis. In Vibrio cholerae serotype O1 (strain ATCC 39315 / El Tor Inaba N16961), this protein is Fructose-1,6-bisphosphatase class 1.